The sequence spans 363 residues: LIM and cysteine-rich domains protein 1 (363 aa).

Serine 16 carries the post-translational modification Phosphoserine. Residues 99–206 (MIMTNPIATG…GEVALPGQGG (108 aa)) enclose the PET domain. The segment at 200–234 (ALPGQGGLPKEEGKQQEKPEGAETAPPTTNGSIGD) is disordered. Residues 208-220 (PKEEGKQQEKPEG) show a composition bias toward basic and acidic residues. LIM zinc-binding domains lie at 239–304 (YVCE…SLRP) and 305–363 (RCSG…SKRS).

In terms of assembly, interacts with beta-dystroglycan. Interacts with GATA1, GATA4 and GATA6.

The protein resides in the cytoplasm. It is found in the nucleus. In terms of biological role, transcriptional cofactor that restricts GATA6 function by inhibiting DNA-binding, resulting in repression of GATA6 transcriptional activation of downstream target genes. Represses GATA6-mediated trans activation of lung- and cardiac tissue-specific promoters. Inhibits DNA-binding by GATA4 and GATA1 to the cTNC promoter. Plays a critical role in the development of cardiac hypertrophy via activation of calcineurin/nuclear factor of activated T-cells signaling pathway. The sequence is that of LIM and cysteine-rich domains protein 1 (LMCD1) from Bos taurus (Bovine).